A 479-amino-acid polypeptide reads, in one-letter code: NADH-quinone oxidoreductase subunit N (479 aa).

Transmembrane regions (helical) follow at residues M3–I23, I40–I60, I77–A97, H102–A122, F125–F145, Y159–G179, M200–I220, A234–L254, F268–F288, F299–S319, I327–I347, S373–I393, E409–V429, and L452–G472.

It belongs to the complex I subunit 2 family. NDH-1 is composed of 14 different subunits. Subunits NuoA, H, J, K, L, M, N constitute the membrane sector of the complex.

Its subcellular location is the cell inner membrane. It carries out the reaction a quinone + NADH + 5 H(+)(in) = a quinol + NAD(+) + 4 H(+)(out). Functionally, NDH-1 shuttles electrons from NADH, via FMN and iron-sulfur (Fe-S) centers, to quinones in the respiratory chain. The immediate electron acceptor for the enzyme in this species is believed to be ubiquinone. Couples the redox reaction to proton translocation (for every two electrons transferred, four hydrogen ions are translocated across the cytoplasmic membrane), and thus conserves the redox energy in a proton gradient. The chain is NADH-quinone oxidoreductase subunit N from Orientia tsutsugamushi (strain Ikeda) (Rickettsia tsutsugamushi).